Consider the following 250-residue polypeptide: Imidazole glycerol phosphate synthase subunit HisF (250 aa).

Active-site residues include Asp11 and Asp130.

It belongs to the HisA/HisF family. In terms of assembly, heterodimer of HisH and HisF.

The protein resides in the cytoplasm. The catalysed reaction is 5-[(5-phospho-1-deoxy-D-ribulos-1-ylimino)methylamino]-1-(5-phospho-beta-D-ribosyl)imidazole-4-carboxamide + L-glutamine = D-erythro-1-(imidazol-4-yl)glycerol 3-phosphate + 5-amino-1-(5-phospho-beta-D-ribosyl)imidazole-4-carboxamide + L-glutamate + H(+). The protein operates within amino-acid biosynthesis; L-histidine biosynthesis; L-histidine from 5-phospho-alpha-D-ribose 1-diphosphate: step 5/9. In terms of biological role, IGPS catalyzes the conversion of PRFAR and glutamine to IGP, AICAR and glutamate. The HisF subunit catalyzes the cyclization activity that produces IGP and AICAR from PRFAR using the ammonia provided by the HisH subunit. This chain is Imidazole glycerol phosphate synthase subunit HisF, found in Elusimicrobium minutum (strain Pei191).